The chain runs to 259 residues: 5'-nucleotidase SurE (259 aa).

Positions 8, 9, 40, and 95 each coordinate a divalent metal cation.

It belongs to the SurE nucleotidase family. A divalent metal cation is required as a cofactor.

It is found in the cytoplasm. It catalyses the reaction a ribonucleoside 5'-phosphate + H2O = a ribonucleoside + phosphate. Its function is as follows. Nucleotidase that shows phosphatase activity on nucleoside 5'-monophosphates. This Oleidesulfovibrio alaskensis (strain ATCC BAA-1058 / DSM 17464 / G20) (Desulfovibrio alaskensis) protein is 5'-nucleotidase SurE.